The chain runs to 571 residues: Urease subunit alpha (571 aa).

A Urease domain is found at 132–571; sequence GGIDSHIHFI…LPMAQRYFLF (440 aa). Residues histidine 137, histidine 139, and lysine 220 each coordinate Ni(2+). N6-carboxylysine is present on lysine 220. Substrate is bound at residue histidine 222. Ni(2+) is bound by residues histidine 249 and histidine 275. Residue histidine 323 is the Proton donor of the active site. Aspartate 363 is a binding site for Ni(2+).

Belongs to the metallo-dependent hydrolases superfamily. Urease alpha subunit family. In terms of assembly, heterotrimer of UreA (gamma), UreB (beta) and UreC (alpha) subunits. Three heterotrimers associate to form the active enzyme. It depends on Ni cation as a cofactor. Carboxylation allows a single lysine to coordinate two nickel ions.

Its subcellular location is the cytoplasm. The catalysed reaction is urea + 2 H2O + H(+) = hydrogencarbonate + 2 NH4(+). Its pathway is nitrogen metabolism; urea degradation; CO(2) and NH(3) from urea (urease route): step 1/1. In Kocuria rhizophila (strain ATCC 9341 / DSM 348 / NBRC 103217 / DC2201), this protein is Urease subunit alpha.